Here is a 101-residue protein sequence, read N- to C-terminus: NADH-quinone oxidoreductase subunit K (101 aa).

3 helical membrane passes run 4 to 24 (LEHY…GIFL), 30 to 50 (IVIL…LVAF), and 65 to 85 (FVLT…VTFF).

This sequence belongs to the complex I subunit 4L family. NDH-1 is composed of 14 different subunits. Subunits NuoA, H, J, K, L, M, N constitute the membrane sector of the complex.

The protein localises to the cell inner membrane. The enzyme catalyses a quinone + NADH + 5 H(+)(in) = a quinol + NAD(+) + 4 H(+)(out). Its function is as follows. NDH-1 shuttles electrons from NADH, via FMN and iron-sulfur (Fe-S) centers, to quinones in the respiratory chain. The immediate electron acceptor for the enzyme in this species is believed to be ubiquinone. Couples the redox reaction to proton translocation (for every two electrons transferred, four hydrogen ions are translocated across the cytoplasmic membrane), and thus conserves the redox energy in a proton gradient. This Cereibacter sphaeroides (strain ATCC 17029 / ATH 2.4.9) (Rhodobacter sphaeroides) protein is NADH-quinone oxidoreductase subunit K.